A 302-amino-acid polypeptide reads, in one-letter code: MKNLLSMSDAKNEVNAILEIASGLKSGEITEKPLTNKYIGMIFEKSSTRTRVSFEVGIHQLGGTPLYLSSKDLQLNRGEPIEDTARVLSRFLDGIMIRAKKHENVEELVQYSTIPIISGLTDKEHPCQIFADLLTIKEYKGDFNDKKIVFIGDGNNVCNSLLLAAAYVGMDMTVACPEGYEPNEKIYTLAKQEAQKTNSTIKIENNVNEAVKDADVLYTDVWVSMGDEDEQDERERIFKPYQINNELLSQAKDDAIVMHCLPAIRGQEITADVMVSPQSAIWDQAENRLHAQKAILYHIFKE.

Carbamoyl phosphate is bound by residues 47 to 50 (STRT), Gln74, Arg98, and 125 to 128 (HPCQ). L-ornithine-binding positions include Asn156, Asp220, and 224–225 (SM). Residues 260-261 (CL) and Arg288 each bind carbamoyl phosphate.

It belongs to the aspartate/ornithine carbamoyltransferase superfamily. OTCase family.

The protein localises to the cytoplasm. The enzyme catalyses carbamoyl phosphate + L-ornithine = L-citrulline + phosphate + H(+). It participates in amino-acid biosynthesis; L-arginine biosynthesis; L-arginine from L-ornithine and carbamoyl phosphate: step 1/3. Functionally, reversibly catalyzes the transfer of the carbamoyl group from carbamoyl phosphate (CP) to the N(epsilon) atom of ornithine (ORN) to produce L-citrulline. The polypeptide is Ornithine carbamoyltransferase (Methanosphaera stadtmanae (strain ATCC 43021 / DSM 3091 / JCM 11832 / MCB-3)).